The primary structure comprises 284 residues: Tropomyosin isoforms a/b/d/f (284 aa).

A coiled-coil region spans residues 1–284 (MDAIKKKMQA…DSTFQELSGY (284 aa)). The interval 40–78 (EEELRDTQKKMTQTGDDLDKAQEDLSAATSKLEEKEKTV) is disordered.

The protein belongs to the tropomyosin family. As to expression, isoform a and isoform d are expressed in body wall muscles, vulva, anus muscles and male tail muscles. Located to the myofibrils of thin actin filaments.

The protein localises to the cytoplasm. Its subcellular location is the myofibril. It is found in the sarcomere. The protein resides in the i band. In terms of biological role, tropomyosin, in association with the troponin complex, plays a central role in the calcium dependent regulation of muscle contraction. Involved in muscle actin filament organization and muscle arm extension and morphology. Protects actin filaments from depolymerization by unc-60 in vitro. Also has a role in male mating behavior by regulating the copulatory spicules. Binds to F-actin. This chain is Tropomyosin isoforms a/b/d/f (lev-11), found in Caenorhabditis elegans.